The following is a 39-amino-acid chain: Photosystem II reaction center protein X (39 aa).

A helical transmembrane segment spans residues 10–30; that stretch reads WSLVLGAAIVLIPATIGLIFI.

The protein belongs to the PsbX family. Type 1 subfamily. In terms of assembly, PSII is composed of 1 copy each of membrane proteins PsbA, PsbB, PsbC, PsbD, PsbE, PsbF, PsbH, PsbI, PsbJ, PsbK, PsbL, PsbM, PsbT, PsbX, PsbY, PsbZ, Psb30/Ycf12, peripheral proteins PsbO, CyanoQ (PsbQ), PsbU, PsbV and a large number of cofactors. It forms dimeric complexes.

Its subcellular location is the cellular thylakoid membrane. Involved in the binding and/or turnover of quinones at the Q(B) site of photosystem II (PSII). PSII is a light-driven water plastoquinone oxidoreductase, using light energy to abstract electrons from H(2)O, generating a proton gradient subsequently used for ATP formation. This is Photosystem II reaction center protein X from Microcystis aeruginosa (strain NIES-843 / IAM M-2473).